The following is an 89-amino-acid chain: Small ribosomal subunit protein bS20 (89 aa).

This sequence belongs to the bacterial ribosomal protein bS20 family.

Binds directly to 16S ribosomal RNA. In Wolbachia sp. subsp. Drosophila simulans (strain wRi), this protein is Small ribosomal subunit protein bS20.